Here is a 266-residue protein sequence, read N- to C-terminus: uncharacterized protein (266 aa).

The next 8 helical transmembrane spans lie at 9–29 (IAAL…LFIF), 37–57 (TMPH…LVFY), 69–89 (LIKV…ISLL), 123–143 (FLLM…MIFT), 153–173 (YNPF…LVIA), 184–204 (LPLA…LFLL), 216–236 (SVFA…ILIL), and 246–266 (TNSL…MVFV).

It is found in the cell membrane. This is an uncharacterized protein from Haemophilus influenzae (strain ATCC 51907 / DSM 11121 / KW20 / Rd).